Consider the following 354-residue polypeptide: Abasic site processing protein HMCES (354 aa).

Cysteine 2 functions as the Nucleophile in the catalytic mechanism. The residue at position 2 (cysteine 2) is a Thiazolidine linkage to a ring-opened DNA abasic site. Glutamate 127 is an active-site residue. Residues lysine 148 and lysine 151 each participate in a glycyl lysine isopeptide (Lys-Gly) (interchain with G-Cter in SUMO2) cross-link. Phosphoserine is present on serine 160. A Glycyl lysine isopeptide (Lys-Gly) (interchain with G-Cter in SUMO2) cross-link involves residue lysine 276. The interval 292 to 354 is disordered; the sequence is ATKSPKKEDS…EPVAKRPYSQ (63 aa). The residue at position 295 (serine 295) is a Phosphoserine. The segment covering 296–309 has biased composition (basic and acidic residues); sequence PKKEDSKTPQKEES. Residue lysine 306 forms a Glycyl lysine isopeptide (Lys-Gly) (interchain with G-Cter in SUMO2) linkage. Phosphoserine is present on serine 322. The PIP-box motif lies at 332–338; sequence GLLEQWL. Over residues 337 to 348 the composition is skewed to basic and acidic residues; it reads WLKREKEEEPVA. Glycyl lysine isopeptide (Lys-Gly) (interchain with G-Cter in SUMO2) cross-links involve residues lysine 339 and lysine 342.

It belongs to the SOS response-associated peptidase family. In terms of assembly, interacts (via PIP-box motif) with PCNA. Ubiquitinated; the covalent HMCES DNA-protein cross-link is ubiquitinated, leading to its degradation by the proteasome.

It localises to the chromosome. Formation and reversal of DNA-protein cross-link depends on DNA context. Catalyzes formation of the thiazolidine linkage in presence of abasic sites in single-stranded DNA. Mediates the reversal of the thiazolidine cross-link in presence of double stranded DNA. Sensor of abasic sites in single-stranded DNA (ssDNA) required to preserve genome integrity by promoting error-free repair of abasic sites. Acts as an enzyme that recognizes and binds abasic sites in ssDNA at replication forks and chemically modifies the lesion by forming a covalent cross-link with DNA: forms a stable thiazolidine linkage between a ring-opened abasic site and the alpha-amino and sulfhydryl substituents of its N-terminal catalytic cysteine residue. Promotes error-free repair by protecting abasic sites from translesion synthesis (TLS) polymerases and endonucleases that are error-prone and would generate mutations and double-strand breaks. The HMCES DNA-protein cross-link is then either reversed or degraded. HMCES is able to catalyze the reversal of its thiazolidine cross-link and cycle between a cross-link and a non-cross-linked state depending on DNA context: mediates self-reversal of the thiazolidine cross-link in double stranded DNA, allowing APEX1 to initiate downstream repair of abasic sites. The HMCES DNA-protein cross-link can also be degraded by the SPRTN metalloprotease following unfolding by the BRIP1/FANCJ helicase. Has preference for ssDNA, but can also accommodate double-stranded DNA with 3' or 5' overhang (dsDNA), and dsDNA-ssDNA 3' junction. Plays a protective role during somatic hypermutation of immunoglobulin genes in B-cells: acts via its ability to form covalent cross-links with abasic sites, thereby limiting the accumulation of deletions in somatic hypermutation target regions. Also involved in class switch recombination (CSR) in B-cells independently of the formation of a DNA-protein cross-link: acts by binding and protecting ssDNA overhangs to promote DNA double-strand break repair through the microhomology-mediated alternative-end-joining (Alt-EJ) pathway. Acts as a protease: mediates autocatalytic processing of its N-terminal methionine in order to expose the catalytic cysteine. This is Abasic site processing protein HMCES from Pongo abelii (Sumatran orangutan).